Reading from the N-terminus, the 500-residue chain is Putative beta-glucosidase 5 (500 aa).

The N-terminal stretch at 1–20 (MEQFFALFTIFLSFAFPGRC) is a signal peptide. A beta-D-glucoside is bound by residues Gln43, His140, and 185–186 (NE). Residue Glu186 is the Proton donor of the active site. A disulfide bridge connects residues Cys205 and Cys212. Asn216 carries N-linked (GlcNAc...) asparagine glycosylation. Residue Tyr328 coordinates a beta-D-glucoside. N-linked (GlcNAc...) asparagine glycosylation is present at Asn361. Position 394 (Glu394) interacts with a beta-D-glucoside. The Nucleophile role is filled by Glu394. Asn424 carries an N-linked (GlcNAc...) asparagine glycan. Residues Trp434 and Tyr450 each contribute to the a beta-D-glucoside site. N-linked (GlcNAc...) asparagine glycans are attached at residues Asn456 and Asn495.

Belongs to the glycosyl hydrolase 1 family.

It catalyses the reaction Hydrolysis of terminal, non-reducing beta-D-glucosyl residues with release of beta-D-glucose.. The protein is Putative beta-glucosidase 5 of Arabidopsis thaliana (Mouse-ear cress).